Consider the following 329-residue polypeptide: MASQLTDAFARKFYYLRLSITDVCNFRCTYCLPDGYKPSGVTNKGFLTVDEIRRVTRAFASLGTEKVRLTGGEPSLRRDFTDIIAAVRENDAIRQIAVTTNGYRLERDVANWRDAGLTGINVSVDSLDARQFHAITGQDKFNQVMAGIDAAFEVGFEKVKVNTVLMRDVNHHQLDTFLNWIQHRPIQLRFIELMETGEGSELFRKHHISGQVLRDELLRRGWIHQLRQRSDGPAQVFCHPDYAGEIGLIMPYEKDFCATCNRLRVSSIGKLHLCLFGEGGVNLRDLLEDDTQQQALEARISAALREKKQTHFLHQNNTGITQNLSYIGG.

The 227-residue stretch at 8 to 234 folds into the Radical SAM core domain; that stretch reads AFARKFYYLR…QLRQRSDGPA (227 aa). Arg-17 lines the GTP pocket. Residues Cys-24 and Cys-28 each contribute to the [4Fe-4S] cluster site. Tyr-30 serves as a coordination point for S-adenosyl-L-methionine. Cys-31 contacts [4Fe-4S] cluster. Arg-68 contacts GTP. Gly-72 is an S-adenosyl-L-methionine binding site. A GTP-binding site is contributed by Thr-99. Ser-123 contributes to the S-adenosyl-L-methionine binding site. Residue Lys-160 participates in GTP binding. Met-194 serves as a coordination point for S-adenosyl-L-methionine. Positions 257 and 260 each coordinate [4Fe-4S] cluster. 262-264 contributes to the GTP binding site; sequence RLR. Cys-274 is a binding site for [4Fe-4S] cluster.

The protein belongs to the radical SAM superfamily. MoaA family. In terms of assembly, monomer and homodimer. The cofactor is [4Fe-4S] cluster.

The enzyme catalyses GTP + AH2 + S-adenosyl-L-methionine = (8S)-3',8-cyclo-7,8-dihydroguanosine 5'-triphosphate + 5'-deoxyadenosine + L-methionine + A + H(+). It participates in cofactor biosynthesis; molybdopterin biosynthesis. Its function is as follows. Catalyzes the cyclization of GTP to (8S)-3',8-cyclo-7,8-dihydroguanosine 5'-triphosphate. The sequence is that of GTP 3',8-cyclase from Shigella sonnei (strain Ss046).